A 179-amino-acid polypeptide reads, in one-letter code: Large ribosomal subunit protein uL5 (179 aa).

It belongs to the universal ribosomal protein uL5 family. Part of the 50S ribosomal subunit; part of the 5S rRNA/L5/L18/L25 subcomplex. Contacts the 5S rRNA and the P site tRNA. Forms a bridge to the 30S subunit in the 70S ribosome.

This is one of the proteins that bind and probably mediate the attachment of the 5S RNA into the large ribosomal subunit, where it forms part of the central protuberance. In the 70S ribosome it contacts protein S13 of the 30S subunit (bridge B1b), connecting the 2 subunits; this bridge is implicated in subunit movement. Contacts the P site tRNA; the 5S rRNA and some of its associated proteins might help stabilize positioning of ribosome-bound tRNAs. This Natranaerobius thermophilus (strain ATCC BAA-1301 / DSM 18059 / JW/NM-WN-LF) protein is Large ribosomal subunit protein uL5.